The chain runs to 336 residues: 4-hydroxythreonine-4-phosphate dehydrogenase (336 aa).

Threonine 140 serves as a coordination point for substrate. Residues histidine 171, histidine 216, and histidine 271 each coordinate a divalent metal cation. Substrate contacts are provided by lysine 279, asparagine 288, and arginine 297.

This sequence belongs to the PdxA family. Homodimer. The cofactor is Zn(2+). It depends on Mg(2+) as a cofactor. Requires Co(2+) as cofactor.

It is found in the cytoplasm. The enzyme catalyses 4-(phosphooxy)-L-threonine + NAD(+) = 3-amino-2-oxopropyl phosphate + CO2 + NADH. It participates in cofactor biosynthesis; pyridoxine 5'-phosphate biosynthesis; pyridoxine 5'-phosphate from D-erythrose 4-phosphate: step 4/5. Catalyzes the NAD(P)-dependent oxidation of 4-(phosphooxy)-L-threonine (HTP) into 2-amino-3-oxo-4-(phosphooxy)butyric acid which spontaneously decarboxylates to form 3-amino-2-oxopropyl phosphate (AHAP). The protein is 4-hydroxythreonine-4-phosphate dehydrogenase of Erythrobacter litoralis (strain HTCC2594).